Here is a 227-residue protein sequence, read N- to C-terminus: Cytochrome c oxidase subunit 2 (227 aa).

At 1–14 the chain is on the mitochondrial intermembrane side; that stretch reads MAYPMQLGFQDATS. The chain crosses the membrane as a helical span at residues 15 to 45; it reads PIMEELLHFHDHTLMIVFLISSLVLYVISLM. Topologically, residues 46 to 59 are mitochondrial matrix; the sequence is LTTKLTHTSTMDAQ. The helical transmembrane segment at 60 to 87 threads the bilayer; it reads EVETIWTILPAIILILIALPSLRILYMM. The Mitochondrial intermembrane portion of the chain corresponds to 88-227; sequence DEINNPSLTV…YFEKWSASML (140 aa). His-161, Cys-196, Glu-198, Cys-200, His-204, and Met-207 together coordinate Cu cation. Glu-198 is a Mg(2+) binding site. Tyr-218 bears the Phosphotyrosine mark.

It belongs to the cytochrome c oxidase subunit 2 family. As to quaternary structure, component of the cytochrome c oxidase (complex IV, CIV), a multisubunit enzyme composed of 14 subunits. The complex is composed of a catalytic core of 3 subunits MT-CO1, MT-CO2 and MT-CO3, encoded in the mitochondrial DNA, and 11 supernumerary subunits COX4I, COX5A, COX5B, COX6A, COX6B, COX6C, COX7A, COX7B, COX7C, COX8 and NDUFA4, which are encoded in the nuclear genome. The complex exists as a monomer or a dimer and forms supercomplexes (SCs) in the inner mitochondrial membrane with NADH-ubiquinone oxidoreductase (complex I, CI) and ubiquinol-cytochrome c oxidoreductase (cytochrome b-c1 complex, complex III, CIII), resulting in different assemblies (supercomplex SCI(1)III(2)IV(1) and megacomplex MCI(2)III(2)IV(2)). Found in a complex with TMEM177, COA6, COX18, COX20, SCO1 and SCO2. Interacts with TMEM177 in a COX20-dependent manner. Interacts with COX20. Interacts with COX16. Cu cation serves as cofactor.

It is found in the mitochondrion inner membrane. It carries out the reaction 4 Fe(II)-[cytochrome c] + O2 + 8 H(+)(in) = 4 Fe(III)-[cytochrome c] + 2 H2O + 4 H(+)(out). Component of the cytochrome c oxidase, the last enzyme in the mitochondrial electron transport chain which drives oxidative phosphorylation. The respiratory chain contains 3 multisubunit complexes succinate dehydrogenase (complex II, CII), ubiquinol-cytochrome c oxidoreductase (cytochrome b-c1 complex, complex III, CIII) and cytochrome c oxidase (complex IV, CIV), that cooperate to transfer electrons derived from NADH and succinate to molecular oxygen, creating an electrochemical gradient over the inner membrane that drives transmembrane transport and the ATP synthase. Cytochrome c oxidase is the component of the respiratory chain that catalyzes the reduction of oxygen to water. Electrons originating from reduced cytochrome c in the intermembrane space (IMS) are transferred via the dinuclear copper A center (CU(A)) of subunit 2 and heme A of subunit 1 to the active site in subunit 1, a binuclear center (BNC) formed by heme A3 and copper B (CU(B)). The BNC reduces molecular oxygen to 2 water molecules using 4 electrons from cytochrome c in the IMS and 4 protons from the mitochondrial matrix. This chain is Cytochrome c oxidase subunit 2 (MT-CO2), found in Rusa unicolor (Sambar).